The chain runs to 1165 residues: Chromosome partition protein Smc (1165 aa).

32–39 provides a ligand contact to ATP; the sequence is PNGSGKSN. A coiled-coil region spans residues 161 to 503; that stretch reads AGVAEFDRKI…ETQRQVWREA (343 aa). One can recognise an SMC hinge domain in the interval 518–630; it reads QGVHGLISQL…VFRSLELARR (113 aa). Coiled-coil stretches lie at residues 672 to 901 and 946 to 1010; these read ELAE…LQQR and DLSL…DCDT.

Belongs to the SMC family. Homodimer.

Its subcellular location is the cytoplasm. Required for chromosome condensation and partitioning. This is Chromosome partition protein Smc from Gloeobacter violaceus (strain ATCC 29082 / PCC 7421).